The sequence spans 742 residues: Zinc transporter ZIP6 (742 aa).

At Met1–Trp353 the chain is on the extracellular side. Asn94 and Asn127 each carry an N-linked (GlcNAc...) asparagine glycan. Disordered regions lie at residues Pro148–Asp182 and Met191–Arg210. The segment covering Lys152–Pro165 has biased composition (basic and acidic residues). Over residues Asn192–Thr206 the composition is skewed to polar residues. 3 N-linked (GlcNAc...) asparagine glycosylation sites follow: Asn212, Asn232, and Asn237. Residues Thr220–Arg260 are disordered. The segment covering Asp222 to Ser236 has biased composition (polar residues). A compositionally biased stretch (basic and acidic residues) spans Thr239–Arg260. N-linked (GlcNAc...) asparagine glycans are attached at residues Asn267 and Asn337. Positions Glu310–Arg342 are disordered. The span at His316–Thr339 shows a compositional bias: basic residues. A helical membrane pass occupies residues Leu354–Ile374. Residues Pro375–Leu385 lie on the Cytoplasmic side of the membrane. Residues Leu386–Ile406 traverse the membrane as a helical segment. The Extracellular segment spans residues Pro407–Pro430. The helical transmembrane segment at Val431–Leu451 threads the bilayer. Residues Thr452 to Ala644 are Cytoplasmic-facing. Residues Met645–Ile665 form a helical membrane-spanning segment. Residues Gly666–Asn671 lie on the Extracellular side of the membrane. Residues Val672–Met692 traverse the membrane as a helical segment. At Val693–Gly710 the chain is on the cytoplasmic side. The chain crosses the membrane as a helical span at residues Phe711 to Val731. The Extracellular portion of the chain corresponds to Phe732–Tyr742.

The protein belongs to the ZIP transporter (TC 2.A.5) family. In terms of processing, cleaved on the N-terminus before locating to the plasma membrane. N-glycosylated.

The protein localises to the cell membrane. It catalyses the reaction Zn(2+)(in) = Zn(2+)(out). Acts as a zinc-influx transporter which plays a role in zinc homeostasis and in the induction of epithelial-to-mesenchymal transition (EMT). This is Zinc transporter ZIP6 from Danio rerio (Zebrafish).